Consider the following 488-residue polypeptide: C2H2-type transcription factor MSN2 (488 aa).

2 C2H2-type zinc fingers span residues 376-399 (FVCD…RSLH) and 405-427 (FECN…ARTH).

It is found in the nucleus. It localises to the cytoplasm. Its function is as follows. Transcription factor that acts as a key downstream transcription factor in the HOG1-MAPK pathway. Plays crucial roles in the regulation of conidiation, virulence and multi-stress responses. Acts as a negative regulator of proteases, lipases, as well as of the red-pigmented oosporein production, and contributes to virulence and growth in response to external pH. Contributes to the ability to infect Rhipicephalus microplus (Acari, Ixodidae) via the cuticle-penetration requiring route involving proteolytic activity at the host cuticle. Does not seem to be involved in subsequent growth and proliferation once the tick cuticle has been breached. The chain is C2H2-type transcription factor MSN2 from Beauveria bassiana (strain ARSEF 2860) (White muscardine disease fungus).